Here is a 141-residue protein sequence, read N- to C-terminus: VLSPADKTNVKTTWDKIGGHAGEYGGEALERTFMAFPTTKTYFPHFDLSPGSAQVKTHGKKVADALTTAVSHIDDLPGALSALSDLHAYKLRVDPVNFKLLSHCLLVTLACHHPADFTPAVHASLDKFFSAVSTVLTSKYR.

The Globin domain maps to 1–141 (VLSPADKTNV…VSTVLTSKYR (141 aa)). Serine 3 is subject to Phosphoserine. Lysine 7 is subject to N6-succinyllysine. Threonine 8 is subject to Phosphothreonine. Lysine 11 is subject to N6-succinyllysine. Lysine 16 carries the post-translational modification N6-acetyllysine; alternate. Lysine 16 carries the N6-succinyllysine; alternate modification. Tyrosine 24 bears the Phosphotyrosine mark. Position 40 is an N6-succinyllysine (lysine 40). Serine 49 carries the post-translational modification Phosphoserine. Histidine 58 contacts O2. Residue histidine 87 coordinates heme b. Phosphoserine is present on serine 102. Threonine 108 is subject to Phosphothreonine. Serine 124 carries the post-translational modification Phosphoserine. Phosphothreonine is present on residues threonine 134 and threonine 137. Serine 138 is modified (phosphoserine).

This sequence belongs to the globin family. As to quaternary structure, heterotetramer of two alpha chains and two beta chains. In terms of tissue distribution, red blood cells.

Involved in oxygen transport from the lung to the various peripheral tissues. This Leptonychotes weddellii (Weddell seal) protein is Hemoglobin subunit alpha-1/2.